Reading from the N-terminus, the 356-residue chain is S-adenosylmethionine:tRNA ribosyltransferase-isomerase (356 aa).

It belongs to the QueA family. In terms of assembly, monomer.

Its subcellular location is the cytoplasm. The enzyme catalyses 7-aminomethyl-7-carbaguanosine(34) in tRNA + S-adenosyl-L-methionine = epoxyqueuosine(34) in tRNA + adenine + L-methionine + 2 H(+). It participates in tRNA modification; tRNA-queuosine biosynthesis. In terms of biological role, transfers and isomerizes the ribose moiety from AdoMet to the 7-aminomethyl group of 7-deazaguanine (preQ1-tRNA) to give epoxyqueuosine (oQ-tRNA). The protein is S-adenosylmethionine:tRNA ribosyltransferase-isomerase of Escherichia coli O127:H6 (strain E2348/69 / EPEC).